The chain runs to 136 residues: Histone H3.3 (136 aa).

Residues 1–45 (MARTKQTARKSTGGKAPRKQLASKAARKAAPATGGVKKPHRYRPP) form a disordered region. Lysine 5 is subject to N6,N6,N6-trimethyllysine; alternate. Lysine 5 carries the post-translational modification N6,N6-dimethyllysine; alternate. N6-methyllysine; alternate occurs at positions 5 and 10. Lysine 10 carries the N6-acetyllysine; alternate modification. Position 11 is a phosphoserine (serine 11). At lysine 15 the chain carries N6,N6-dimethyllysine; alternate. Residues lysine 15, lysine 19, lysine 24, lysine 28, and lysine 37 each carry the N6-acetyllysine; alternate modification. Residues lysine 19, lysine 24, lysine 28, and lysine 37 each carry the N6-methyllysine; alternate modification. Residues 19-32 (KQLASKAARKAAPA) are compositionally biased toward low complexity. Residues lysine 28 and lysine 37 each carry the N6,N6,N6-trimethyllysine; alternate modification. An N6,N6-dimethyllysine; alternate mark is found at lysine 28 and lysine 37. An N6-acetyllysine mark is found at lysine 57 and lysine 65. N6,N6,N6-trimethyllysine; alternate is present on lysine 80. An N6,N6-dimethyllysine; alternate modification is found at lysine 80. Lysine 80 bears the N6-methyllysine; alternate mark. Lysine 123 carries the N6-acetyllysine modification.

It belongs to the histone H3 family. As to quaternary structure, the nucleosome is a histone octamer containing two molecules each of H2A, H2B, H3 and H4 assembled in one H3-H4 heterotetramer and two H2A-H2B heterodimers. The octamer wraps approximately 147 bp of DNA. In terms of processing, phosphorylated by ark1 to form H3S10ph in a cell cycle-dependent manner during mitosis and meiosis. H3S10ph is also formed by ssp2, promotes subsequent H3K14ac formation by gcn5, and is required for transcriptional activation through TBP recruitment to the promoters. Dephosphorylation is performed by sds21. Post-translationally, mono-, di- and trimethylated by the COMPASS complex to form H3K4me1/2/3. H3K4me activates gene expression by regulating transcription elongation and plays a role in telomere length maintenance. H3K4me enrichment correlates with transcription levels, and occurs in a 5' to 3' gradient with H3K4me3 enrichment at the 5'-end of genes, shifting to H3K4me2 and then H3K4me1. Methylated by clr4 to form H3K9me1. H3K9me1 represents a specific tag for epigenetic transcriptional repression by recruiting swi6/HP1 to methylated histones. Targeting to histone probably involves clr3 and rik1. Essential for silencing of centromeres and directional switching of the mating type. Methylated by set2 to form H3K36me. H3K36me represses gene expression. Methylated by dot1 to form H3K79me. H3K79me is required for association of SIR proteins with telomeric regions and for telomeric silencing. The COMPASS-mediated formation of H3K4me2/3 and the dot1-mediated formation of H3K79me require H2BK123ub1. Acetylation of histone H3 leads to transcriptional activation. H3K14ac formation by gcn5 is promoted by H3S10ph. H3K14ac can also be formed by esa1. H3K56ac formation occurs predominantly in newly synthesized H3 molecules during G1, S and G2/M of the cell cycle and may be involved in DNA repair. Acetylation at Lys-123 (H3K122ac) plays a central role in chromatin structure: localizes at the surface of the histone octamer and stimulates transcription, possibly by promoting nucleosome instability.

The protein resides in the nucleus. It is found in the chromosome. Its function is as follows. Core component of nucleosome. Nucleosomes wrap and compact DNA into chromatin, limiting DNA accessibility to the cellular machineries which require DNA as a template. Histones thereby play a central role in transcription regulation, DNA repair, DNA replication and chromosomal stability. DNA accessibility is regulated via a complex set of post-translational modifications of histones, also called histone code, and nucleosome remodeling. In Schizosaccharomyces pombe (strain 972 / ATCC 24843) (Fission yeast), this protein is Histone H3.3 (hht3).